The sequence spans 144 residues: HTH-type transcriptional repressor NsrR (144 aa).

The 128-residue stretch at 2–129 folds into the HTH rrf2-type domain; sequence QLTSFTDYGL…DKHTLLSLID (128 aa). Residues 28–51 constitute a DNA-binding region (H-T-H motif); it reads ISKVTEVYGVSRNHMVKIINKLGQ. Cys91, Cys96, and Cys102 together coordinate [2Fe-2S] cluster.

The cofactor is [2Fe-2S] cluster.

Its function is as follows. Nitric oxide-sensitive repressor of genes involved in protecting the cell against nitrosative stress. May require iron for activity. This is HTH-type transcriptional repressor NsrR from Photobacterium profundum (strain SS9).